The primary structure comprises 200 residues: Oligoribonuclease (200 aa).

Positions 5–169 (MVWIDCEMTG…ADIRESIAEL (165 aa)) constitute an Exonuclease domain. Tyr126 is an active-site residue.

This sequence belongs to the oligoribonuclease family.

The protein localises to the cytoplasm. Functionally, 3'-to-5' exoribonuclease specific for small oligoribonucleotides. The chain is Oligoribonuclease from Streptomyces coelicolor (strain ATCC BAA-471 / A3(2) / M145).